The sequence spans 161 residues: Phosphopantetheine adenylyltransferase (161 aa).

Residue Ser11 participates in substrate binding. ATP is bound by residues 11–12 and His19; that span reads SF. Positions 43, 75, and 89 each coordinate substrate. ATP is bound by residues 90-92, Glu100, and 125-131; these read GLR and YSFISSS.

Belongs to the bacterial CoaD family. In terms of assembly, homohexamer. The cofactor is Mg(2+).

It is found in the cytoplasm. It catalyses the reaction (R)-4'-phosphopantetheine + ATP + H(+) = 3'-dephospho-CoA + diphosphate. It functions in the pathway cofactor biosynthesis; coenzyme A biosynthesis; CoA from (R)-pantothenate: step 4/5. In terms of biological role, reversibly transfers an adenylyl group from ATP to 4'-phosphopantetheine, yielding dephospho-CoA (dPCoA) and pyrophosphate. In Staphylococcus saprophyticus subsp. saprophyticus (strain ATCC 15305 / DSM 20229 / NCIMB 8711 / NCTC 7292 / S-41), this protein is Phosphopantetheine adenylyltransferase.